A 321-amino-acid chain; its full sequence is ATP-dependent 6-phosphofructokinase (321 aa).

ATP is bound at residue G12. Residues 22–26 (RGVVR) and 55–60 (RYSVSD) contribute to the ADP site. ATP contacts are provided by residues 73–74 (RF) and 103–106 (GDGS). Residue D104 coordinates Mg(2+). 127 to 129 (TID) is a binding site for substrate. The active-site Proton acceptor is the D129. R156 contributes to the ADP binding site. Substrate is bound by residues R164 and 171-173 (MGR). ADP is bound by residues 187-189 (GCE), K213, and 215-217 (KRH). Substrate contacts are provided by residues E224, R245, and 251–254 (HIQR).

It belongs to the phosphofructokinase type A (PFKA) family. ATP-dependent PFK group I subfamily. Prokaryotic clade 'B1' sub-subfamily. Homotetramer. Requires Mg(2+) as cofactor.

It is found in the cytoplasm. It catalyses the reaction beta-D-fructose 6-phosphate + ATP = beta-D-fructose 1,6-bisphosphate + ADP + H(+). The protein operates within carbohydrate degradation; glycolysis; D-glyceraldehyde 3-phosphate and glycerone phosphate from D-glucose: step 3/4. Its activity is regulated as follows. Allosterically activated by ADP and other diphosphonucleosides, and allosterically inhibited by phosphoenolpyruvate. Its function is as follows. Catalyzes the phosphorylation of D-fructose 6-phosphate to fructose 1,6-bisphosphate by ATP, the first committing step of glycolysis. The polypeptide is ATP-dependent 6-phosphofructokinase (Histophilus somni (strain 129Pt) (Haemophilus somnus)).